The chain runs to 526 residues: Methane monooxygenase component A alpha chain (526 aa).

Fe cation contacts are provided by glutamate 114, glutamate 144, and histidine 147. The active site involves cysteine 151. 3 residues coordinate Fe cation: glutamate 209, glutamate 243, and histidine 246.

It belongs to the TmoA/XamoA family. As to quaternary structure, m.trichosporium has two forms of methane monooxygenase, a soluble and a membrane-bound type. The soluble type consists of four components (A to D): protein A, comprising three chains, in an alpha-2, beta-2, gamma-2 configuration, is a nonheme iron protein containing an unusual mu-hydroxo bridge structure at its active site and interacts with both oxygen and methane. Requires Fe cation as cofactor.

The enzyme catalyses methane + NADH + O2 + H(+) = methanol + NAD(+) + H2O. It catalyses the reaction methane + NADPH + O2 + H(+) = methanol + NADP(+) + H2O. Responsible for the initial oxygenation of methane to methanol in methanotrophs. It also catalyzes the monohydroxylation of a variety of unactivated alkenes, alicyclic, aromatic and heterocyclic compounds. The polypeptide is Methane monooxygenase component A alpha chain (mmoX) (Methylosinus trichosporium).